The chain runs to 526 residues: Clostripain (526 aa).

The first 27 residues, 1–27, serve as a signal peptide directing secretion; that stretch reads MLRRKVSTLLMTALITTSFLNSKPVYA. Residues 28-50 constitute a propeptide that is removed on maturation; that stretch reads NPVTKSKDNNLKEVQQVTSKSNK. The propeptide at 182–190 is linker; the sequence is EKSNPRLNR. Cys231 acts as the Nucleophile in catalysis.

This sequence belongs to the peptidase C11 family. Heterodimer of a light chain and a heavy chain held together by strong non-covalent forces rather than by intramolecular disulfide bridges.

It carries out the reaction Preferential cleavage: Arg-|-Xaa, including Arg-|-Pro bond, but not Lys-|-Xaa.. In terms of biological role, cysteine endopeptidase with strict specificity. The polypeptide is Clostripain (cloSI) (Hathewaya histolytica (Clostridium histolyticum)).